A 155-amino-acid polypeptide reads, in one-letter code: Small ribosomal subunit protein uS7 (155 aa).

This sequence belongs to the universal ribosomal protein uS7 family. Part of the 30S ribosomal subunit. Contacts proteins S9 and S11.

One of the primary rRNA binding proteins, it binds directly to 16S rRNA where it nucleates assembly of the head domain of the 30S subunit. Is located at the subunit interface close to the decoding center, probably blocks exit of the E-site tRNA. The sequence is that of Small ribosomal subunit protein uS7 from Ureaplasma parvum serovar 3 (strain ATCC 27815 / 27 / NCTC 11736).